Reading from the N-terminus, the 268-residue chain is Syntaxin-22 (268 aa).

A disordered region spans residues 1–23; that stretch reads MSFQDLESGRGRSTRKFNGGRQD. Residue Ser-2 is modified to N-acetylserine. Residues 2–246 lie on the Cytoplasmic side of the membrane; it reads SFQDLESGRG…AAKTQKSNSS (245 aa). Residues 175–237 form the t-SNARE coiled-coil homology domain; sequence EAVIEEREQG…SQGKSQLVQA (63 aa). The helical; Anchor for type IV membrane protein transmembrane segment at 247-267 threads the bilayer; that stretch reads LTCLLLVIFGIVLLIVIIVLA. A topological domain (vesicular) is located at residue Ala-268.

The protein belongs to the syntaxin family. Interacts with VTI11 and SYP51 to form a t-SNARE complex, but not with VPS45. In terms of tissue distribution, expressed in roots, leaves, stems, flower and green siliques.

The protein resides in the prevacuolar compartment membrane. Its subcellular location is the vacuole membrane. May provide the t-SNARE function in the vacuolar assembly. Promotes the formation of vacuolar membrane 'bulbs'. Required for inflorescence stem gravitropism. The polypeptide is Syntaxin-22 (SYP22) (Arabidopsis thaliana (Mouse-ear cress)).